Here is a 256-residue protein sequence, read N- to C-terminus: Major prion protein (256 aa).

A signal peptide spans 1-24; the sequence is MVKSHIGSWILVLFVAMWSDVGLC. An interaction with GRB2, ERI3 and SYN1 region spans residues 25–233; sequence KKRPKPGGGW…ESQAYYQRGA (209 aa). Residues 28 to 110 are disordered; that stretch reads PKPGGGWNTG…QWNKPSKPKT (83 aa). A run of 5 repeats spans residues 54–62, 63–70, 71–78, 79–86, and 87–95. Residues 54–95 are 5 X 8 AA tandem repeats of P-H-G-G-G-W-G-Q; that stretch reads PQGAGGWGQPHGGGWGQPHGGGWGQPHGGGWGQPHGGGGWGQ. Over residues 56–97 the composition is skewed to gly residues; that stretch reads GAGGWGQPHGGGWGQPHGGGWGQPHGGGWGQPHGGGGWGQGG. Cu(2+)-binding residues include His-64, Gly-65, Gly-66, His-72, Gly-73, Gly-74, His-80, Gly-81, Gly-82, His-88, Gly-90, and Gly-91. An intrachain disulfide couples Cys-182 to Cys-217. N-linked (GlcNAc...) asparagine glycosylation is found at Asn-184 and Asn-200. Residue Ala-233 is the site of GPI-anchor amidated alanine attachment. A propeptide spans 234 to 256 (removed in mature form); that stretch reads SVILFSSPPVILLISFLIFLIVG.

Belongs to the prion family. Monomer and homodimer. Has a tendency to aggregate into amyloid fibrils containing a cross-beta spine, formed by a steric zipper of superposed beta-strands. Soluble oligomers may represent an intermediate stage on the path to fibril formation. Copper binding may promote oligomerization. Interacts with GRB2, APP, ERI3/PRNPIP and SYN1. Mislocalized cytosolically exposed PrP interacts with MGRN1; this interaction alters MGRN1 subcellular location and causes lysosomal enlargement. Interacts with KIAA1191.

It localises to the cell membrane. The protein localises to the golgi apparatus. Functionally, its primary physiological function is unclear. Has cytoprotective activity against internal or environmental stresses. May play a role in neuronal development and synaptic plasticity. May be required for neuronal myelin sheath maintenance. May play a role in iron uptake and iron homeostasis. Soluble oligomers are toxic to cultured neuroblastoma cells and induce apoptosis (in vitro). Association with GPC1 (via its heparan sulfate chains) targets PRNP to lipid rafts. Also provides Cu(2+) or Zn(2+) for the ascorbate-mediated GPC1 deaminase degradation of its heparan sulfate side chains. The protein is Major prion protein (PRNP) of Moschus chrysogaster (Alpine musk deer).